The primary structure comprises 455 residues: MVEQGDAAPLLRWAEGPAVSVPQDPALQAGGWVRGGSGEGRVAAEAPRRREPDEPAPPEVLLQPGRLELGDVEEDQVVAVFVVTFDPRSGNMVEWCLPQDIDLEGVEFKSMASGSHKVQSDFIYFRKGPFFGLACFANMPVESELERGARMKSVGILSPSYTLLYRYMHFLENQVRHQLEMPGHYSHLAAFYEDKKGVLHAGPGRGGSLPPVYWLPSIHRYMYPEMKITHPAGCMSQFIKFFGEQILILWKFALLRKRILIFSPPPVGVVCYRVYCCCCLANVSLPGIGGTIPESKPFFYVNVADIESLEVEVSYVACTTEKIFEEKRELYDVYVDNQNVKTHHDHLQPLLKINSADREKYRRLNEQRQMLLYSQEVEGDYSPCEEDLFVLFFLEQNNRIFQTLLEVSASQDKTLTAEHARGMGLDPQGDRSFLMDLLEAYGIDVMLVIDNPCCP.

The segment at 1 to 59 is disordered; it reads MVEQGDAAPLLRWAEGPAVSVPQDPALQAGGWVRGGSGEGRVAAEAPRRREPDEPAPPE. At valine 2 the chain carries N-acetylvaline. The uDENN domain occupies 15–187; that stretch reads EGPAVSVPQD…QLEMPGHYSH (173 aa). Position 41 is an omega-N-methylarginine (arginine 41). The cDENN domain occupies 214–362; that stretch reads WLPSIHRYMY…INSADREKYR (149 aa). The 92-residue stretch at 364-455 folds into the dDENN domain; the sequence is LNEQRQMLLY…MLVIDNPCCP (92 aa).

The protein belongs to the DENND11 family.

Functionally, probable guanine nucleotide exchange factor (GEF). May promote the exchange of GDP to GTP, converting inactive GDP-bound small GTPases into their active GTP-bound form. May play a role in neuritogenesis, as well as in neuronal recovery and/or restructuring in the hippocampus following transient cerebral ischemia. The polypeptide is DENN domain-containing protein 11 (Dennd11) (Mus musculus (Mouse)).